The primary structure comprises 216 residues: Talanin (216 aa).

In terms of tissue distribution, isoform 4 is expressed in placenta, lung, kidney and pancreas.

In terms of biological role, may play a role in uric acid excretion. This is Talanin (ZNF365) from Homo sapiens (Human).